Consider the following 281-residue polypeptide: Bis(5'-nucleosyl)-tetraphosphatase, symmetrical (281 aa).

This sequence belongs to the Ap4A hydrolase family.

The enzyme catalyses P(1),P(4)-bis(5'-adenosyl) tetraphosphate + H2O = 2 ADP + 2 H(+). Its function is as follows. Hydrolyzes diadenosine 5',5'''-P1,P4-tetraphosphate to yield ADP. The chain is Bis(5'-nucleosyl)-tetraphosphatase, symmetrical from Acidovorax ebreus (strain TPSY) (Diaphorobacter sp. (strain TPSY)).